The chain runs to 150 residues: MDDLSRRLLARYQKGLPICAEPYRRMAETLGCSEAEVLERLRRLEADGALSRVGPVLRHQRAGASTLAALAVPEERLQRVAERISQYAEVNHNYQREHRYNLWFVLTAGDRAQLDRVLAEIAADTGLQPLDLPMQEAYCIDLAFPLEASR.

Belongs to the Ahb/Nir family. Probably forms a complex composed of NirD, NirL, NirG and NirH. All proteins are required for the total conversion of siroheme to didecarboxysiroheme.

The catalysed reaction is siroheme + 2 H(+) = 12,18-didecarboxysiroheme + 2 CO2. It functions in the pathway porphyrin-containing compound metabolism. In terms of biological role, involved in heme d1 biosynthesis. Catalyzes the decarboxylation of siroheme into didecarboxysiroheme. This is Siroheme decarboxylase NirD subunit from Pseudomonas aeruginosa (strain ATCC 15692 / DSM 22644 / CIP 104116 / JCM 14847 / LMG 12228 / 1C / PRS 101 / PAO1).